Reading from the N-terminus, the 470-residue chain is mRNA export factor ICP27 homolog (470 aa).

2 disordered regions span residues 1 to 31 (MALSSVSSCEPMEDEMSIMGSDTEDNFTGGD) and 62 to 204 (VGDP…DRLN). Residues 71 to 85 (VSFSASPQRAQPSNP) are compositionally biased toward polar residues. 2 stretches are compositionally biased toward basic residues: residues 94–107 (HGRRNRRRPFRRNN) and 178–187 (RVHRNRRRGN). Residues Cys359, His437, Cys441, and Cys446 each contribute to the Zn(2+) site. The CHC2-type zinc finger occupies 359-446 (CYLSSSGSPT…HKRRCKADTC (88 aa)).

The protein belongs to the HHV-1 ICP27 protein family. As to quaternary structure, homodimer. Homodimerization is required for transactivation. Associates in a complex with RNA, and host export factors NXF1/TAP and ALYREF; these interactions allow nuclear export of viral transcripts. Interacts with three host shuttling SR proteins SRSF1, SRSF3 and SRSF7. Interacts with host SRPK1. Interacts with IE62; this interaction enhances IE62 transactivation.

Its subcellular location is the host cytoplasm. The protein localises to the host nucleus. In terms of biological role, multifunctional regulator of the expression of viral genes that mediates nuclear export of viral intronless mRNAs. This immediate early (EI) protein promotes the nuclear export of viral intronless mRNAs by interacting with mRNAs and host NXF1/TAP. This chain is mRNA export factor ICP27 homolog, found in Equine herpesvirus 1 (strain Ab4p) (EHV-1).